A 153-amino-acid chain; its full sequence is Lipoprotein signal peptidase (153 aa).

3 helical membrane passes run I11–V31, D39–L59, and L68–I88. Catalysis depends on residues D112 and D129. Residues F122–L142 traverse the membrane as a helical segment.

It belongs to the peptidase A8 family.

It localises to the cell inner membrane. The catalysed reaction is Release of signal peptides from bacterial membrane prolipoproteins. Hydrolyzes -Xaa-Yaa-Zaa-|-(S,diacylglyceryl)Cys-, in which Xaa is hydrophobic (preferably Leu), and Yaa (Ala or Ser) and Zaa (Gly or Ala) have small, neutral side chains.. It participates in protein modification; lipoprotein biosynthesis (signal peptide cleavage). In terms of biological role, this protein specifically catalyzes the removal of signal peptides from prolipoproteins. The chain is Lipoprotein signal peptidase from Sulfurimonas denitrificans (strain ATCC 33889 / DSM 1251) (Thiomicrospira denitrificans (strain ATCC 33889 / DSM 1251)).